Reading from the N-terminus, the 308-residue chain is Homeobox-leucine zipper protein HOX2 (308 aa).

2 disordered regions span residues 15–36 (QGSL…SSPW) and 71–117 (QGRA…RKKL). Positions 74-88 (ASTSPDSAAALSSAS) are enriched in low complexity. Residues 112–171 (GGRKKLRLSKDQAAVLEECFKTHSTLNPKQKVALANRLGLRPRQVEVWFQNRRARTKLKQ) constitute a DNA-binding region (homeobox). The segment at 170–214 (KQTEVDCEYLKRWCERLADENKRLEKELADLRALKAAPSPASASA) is leucine-zipper.

It belongs to the HD-ZIP homeobox family. Class II subfamily. In terms of assembly, homodimer. May form a heterodimer with HOX1, HOX3 or HOX7. In terms of tissue distribution, expressed in seedlings, roots, leaves, nodes, internodes, flowers and embryo.

Its subcellular location is the nucleus. Its function is as follows. Probable transcription factor that binds to the DNA sequence 5'-CAAT[GC]ATTG-3'. In Oryza sativa subsp. indica (Rice), this protein is Homeobox-leucine zipper protein HOX2 (HOX2).